A 240-amino-acid chain; its full sequence is Ubiquinone biosynthesis O-methyltransferase (240 aa).

Residues Arg-44, Gly-64, Asp-85, and Met-129 each contribute to the S-adenosyl-L-methionine site.

Belongs to the methyltransferase superfamily. UbiG/COQ3 family.

The enzyme catalyses a 3-demethylubiquinol + S-adenosyl-L-methionine = a ubiquinol + S-adenosyl-L-homocysteine + H(+). It catalyses the reaction a 3-(all-trans-polyprenyl)benzene-1,2-diol + S-adenosyl-L-methionine = a 2-methoxy-6-(all-trans-polyprenyl)phenol + S-adenosyl-L-homocysteine + H(+). It functions in the pathway cofactor biosynthesis; ubiquinone biosynthesis. Its function is as follows. O-methyltransferase that catalyzes the 2 O-methylation steps in the ubiquinone biosynthetic pathway. The chain is Ubiquinone biosynthesis O-methyltransferase from Escherichia coli O8 (strain IAI1).